Reading from the N-terminus, the 213-residue chain is Large ribosomal subunit protein uL1 (213 aa).

The protein belongs to the universal ribosomal protein uL1 family. Part of the 50S ribosomal subunit.

Functionally, binds directly to 23S rRNA. Probably involved in E site tRNA release. Its function is as follows. Protein L1 is also a translational repressor protein, it controls the translation of its operon by binding to its mRNA. This chain is Large ribosomal subunit protein uL1, found in Methanosarcina barkeri (strain Fusaro / DSM 804).